Reading from the N-terminus, the 300-residue chain is 4-hydroxy-tetrahydrodipicolinate synthase (300 aa).

Thr-54 contributes to the pyruvate binding site. Residue Tyr-142 is the Proton donor/acceptor of the active site. Residue Lys-170 is the Schiff-base intermediate with substrate of the active site. Pyruvate is bound at residue Ile-212.

It belongs to the DapA family. Homotetramer; dimer of dimers.

The protein resides in the cytoplasm. It carries out the reaction L-aspartate 4-semialdehyde + pyruvate = (2S,4S)-4-hydroxy-2,3,4,5-tetrahydrodipicolinate + H2O + H(+). It participates in amino-acid biosynthesis; L-lysine biosynthesis via DAP pathway; (S)-tetrahydrodipicolinate from L-aspartate: step 3/4. Functionally, catalyzes the condensation of (S)-aspartate-beta-semialdehyde [(S)-ASA] and pyruvate to 4-hydroxy-tetrahydrodipicolinate (HTPA). This is 4-hydroxy-tetrahydrodipicolinate synthase from Halorhodospira halophila (strain DSM 244 / SL1) (Ectothiorhodospira halophila (strain DSM 244 / SL1)).